The primary structure comprises 417 residues: Oxidoreductase phnG (417 aa).

Residues G16 to A20, R61, and D317 each bind 6-hydroxy-FAD.

It belongs to the FAD-dependent oxidoreductase family. 6-hydroxy-FAD serves as cofactor.

It carries out the reaction deoxyherqueinone + NADPH + O2 + H(+) = herqueinone + NADP(+) + H2O. It functions in the pathway secondary metabolite biosynthesis. Its function is as follows. Oxidoreductase; part of the gene cluster that mediates the biosynthesis of phenalenones such as herqueinone, compounds that have been reported to treat tumors, bacterial infections and/or mycoses, and rheumatic diseases. The non-reducing polyketide synthase phnA synthesizes the heptaketide backbone and cyclizes it into the angular, hemiketal-containing naphtho-gamma-pyrone prephenalenone. The product template (PT) domain of phnA catalyzes only the C4-C9 aldol condensation, which is unprecedented among known PT domains. The transformation of prephenalenone to phenalenones requires an FAD-dependent monooxygenase phnB, which catalyzes the C2 aromatic hydroxylation of prephenalenone and ring opening of the gamma-pyrone ring simultaneously. Subsequent intramolecular deprotonation of C3 phenolic oxygen accelerates phenalenone ring closure to yield the tricyclic phenalenone core with a C2 hydroxylation. The prenyltransferase phnF further catalyzes reverse C-prenylation of phenalenone by direct electrophilic substitution at C6, or possibly via first a forward O-prenylation of a neighboring phenol in phenalenone, followed by a Claisen rearrangement. The hydroalkoxylation enzyme phnH catalyzes the 5-exo-trig cyclization via acid catalysis after the spontaneous deprotonation of 7-OH, which leads to the formation of the dihydrobenzofuran atrovenetin. Atrovenetin is further converted to deoxyherqueinone by the O-methyltransferase phnC which can methylate C2-OH to stabilize the northern portion of the phenalenone core. Finally, the oxidoreductase phnG converts deoxyherqueinone to herqueinone via C6 hydroxylation. The polypeptide is Oxidoreductase phnG (Penicillium herquei).